The following is a 476-amino-acid chain: Protein DETOXIFICATION 17 (476 aa).

The next 12 membrane-spanning stretches (helical) occupy residues 29-51 (LWLS…ISVM), 70-90 (FASV…ETLC), 111-131 (FVLL…EQIL), 140-160 (IASV…AYGL), 177-197 (VFVC…LFVL), 205-225 (GAAL…SCYV), 252-272 (IAFP…LLVL), 286-306 (VLSI…GLGG), 326-346 (LAVY…VTVL), 363-383 (IIAY…LDGL), 405-425 (LGSY…HFHI), and 431-451 (WLGI…VTIF).

The protein belongs to the multi antimicrobial extrusion (MATE) (TC 2.A.66.1) family.

The protein localises to the membrane. In Arabidopsis thaliana (Mouse-ear cress), this protein is Protein DETOXIFICATION 17.